The chain runs to 232 residues: LexA repressor (232 aa).

The H-T-H motif DNA-binding region spans 36–56; the sequence is IREIGDAAGLQSTSSVAYQLK. Residues 62–86 show a composition bias toward basic and acidic residues; the sequence is GFLRRDPNKPRAVDVRHLPETDNRT. The segment at 62-107 is disordered; the sequence is GFLRRDPNKPRAVDVRHLPETDNRTKAGPKAKARPTAGASPQPELA. Residues serine 156 and lysine 193 each act as for autocatalytic cleavage activity in the active site.

The protein belongs to the peptidase S24 family. Homodimer.

It catalyses the reaction Hydrolysis of Ala-|-Gly bond in repressor LexA.. Its function is as follows. Represses a number of genes involved in the response to DNA damage (SOS response), including recA and lexA. In the presence of single-stranded DNA, RecA interacts with LexA causing an autocatalytic cleavage which disrupts the DNA-binding part of LexA, leading to derepression of the SOS regulon and eventually DNA repair. This Corynebacterium efficiens (strain DSM 44549 / YS-314 / AJ 12310 / JCM 11189 / NBRC 100395) protein is LexA repressor.